The chain runs to 718 residues: MSASDLTSVQAAAPQGSRQILVTSALPYANGQIHIGHLVEYIQTDIWVRTLRMHGHEVYYIGADDTHGTPIMLRAEKEGLTPKQLIDRVWTEHKRDFDSFGVSFDNFYTTDSEENRVLSENIYLALQEAGLIAEREIEQAYDPVKEMFLPDRFIKGECPKCHAKDQYGDSCEVCGSTYLPTELLNPYSVVSGATPVRKTSKHYFFRLSDPRCESFLREWVSGLAQPEATNKMREWLGDAGESKLADWDISRDAPYFGFEIPGAPGKYFYVWLDAPVGYYASFKNLCERNGIDFDAWIRPGSKAEQYHFIGKDILYFHTLFWPAMLEFSGHRTPTNVFAHGFLTVDGAKMSKSRGTFITAQSYIDTGLNPEWLRYYFAAKLNATMEDIDLNLDDFQARVNSDLVGKYVNIASRAAGFLIKRFDGRVQDSAMNHPLVAKLRDAIPQIAASYEAREYGRALRHTMELADEVNAYVDGAKPWDLAKDPANAVALHETCSVSLEAFRLLSLALKPVMPRVAVAVEAFFGIAPLAWADAAKPLSSAQPIKAYQHLMTRVDAKQIEALLAANRDSLQAEAAGAAAAGANAAKDAKSNAKASAKPAAVNGADDAPISIDDFAKIDLRIAKIVACQAVEGSDKLLQLTLDVGEEKTRNVFSGIKSAYQPEQLVGKLTVMVANLAPRKMKFGLSEGMVLAASATDEKAEPGLYILEPHSGAKPGMRVK.

The short motif at 27 to 37 (PYANGQIHIGH) is the 'HIGH' region element. Positions 158, 161, 171, and 174 each coordinate Zn(2+). A 'KMSKS' region motif is present at residues 348 to 352 (KMSKS). K351 is an ATP binding site. A tRNA-binding domain is found at 612-718 (DFAKIDLRIA…SGAKPGMRVK (107 aa)).

The protein belongs to the class-I aminoacyl-tRNA synthetase family. MetG type 1 subfamily. As to quaternary structure, homodimer. Zn(2+) is required as a cofactor.

The protein localises to the cytoplasm. It catalyses the reaction tRNA(Met) + L-methionine + ATP = L-methionyl-tRNA(Met) + AMP + diphosphate. Is required not only for elongation of protein synthesis but also for the initiation of all mRNA translation through initiator tRNA(fMet) aminoacylation. This chain is Methionine--tRNA ligase, found in Burkholderia orbicola (strain AU 1054).